The chain runs to 486 residues: Glutamyl-tRNA(Gln) amidotransferase subunit A (486 aa).

Catalysis depends on charge relay system residues K78 and S153. The active-site Acyl-ester intermediate is the S177.

This sequence belongs to the amidase family. GatA subfamily. As to quaternary structure, heterotrimer of A, B and C subunits.

It carries out the reaction L-glutamyl-tRNA(Gln) + L-glutamine + ATP + H2O = L-glutaminyl-tRNA(Gln) + L-glutamate + ADP + phosphate + H(+). In terms of biological role, allows the formation of correctly charged Gln-tRNA(Gln) through the transamidation of misacylated Glu-tRNA(Gln) in organisms which lack glutaminyl-tRNA synthetase. The reaction takes place in the presence of glutamine and ATP through an activated gamma-phospho-Glu-tRNA(Gln). The protein is Glutamyl-tRNA(Gln) amidotransferase subunit A of Desulfosudis oleivorans (strain DSM 6200 / JCM 39069 / Hxd3) (Desulfococcus oleovorans).